Consider the following 502-residue polypeptide: MEGVQRYFKLDRSRQDDFLYPLIFQEYIYALSYDHGLNRSILLENVGYDNKSSLLIVKRLITRMYQQNHLIFSDSNQNPFFGHNKNFYSQMISEGFGVIVEIPFSLRLVSSLEGKEIAKSHNLRSIHSIFPFLEDKFPHLKYVSDILIPHPIHLEILVQALRYWVKDASSLHLLRFFLHEYHNWNSMITPKKSISIFSKRNQRFFLFLYNFHVCEYDSIFIFIRNQSYHLRSTSYGALLGRIFFYGKIEHFVEVFANDFQTILWLFKNPFMHYVRYQGKSILASKGAPLLMNKWKYYLVNFWQCHFYVWSQPVRIHINQLSKHSLDFLGYLSSVRLNPSVVRSQMLENAFIIDNAIKKFDTIVPIIPIIGSLAKARFCNALGHPISKPSWADSSDYDIIDRFVRICRNISHYHSGSSKKKNLYRIKYILRLSCARTLARKHKSTVRAFLKRLGSEFLEEFLTEEEQALSLILPRVSSTSRSLYRGRFWYFDIICINDLANHE.

Belongs to the intron maturase 2 family. MatK subfamily.

It is found in the plastid. The protein resides in the chloroplast. Functionally, usually encoded in the trnK tRNA gene intron. Probably assists in splicing its own and other chloroplast group II introns. In Vitis vinifera (Grape), this protein is Maturase K.